Reading from the N-terminus, the 271-residue chain is Thiazole synthase (271 aa).

The active-site Schiff-base intermediate with DXP is the Lys108. 1-deoxy-D-xylulose 5-phosphate contacts are provided by residues Gly169, Ala195 to Gly196, and Asn217 to Ser218.

Belongs to the ThiG family. In terms of assembly, homotetramer. Forms heterodimers with either ThiH or ThiS.

The protein localises to the cytoplasm. It carries out the reaction [ThiS sulfur-carrier protein]-C-terminal-Gly-aminoethanethioate + 2-iminoacetate + 1-deoxy-D-xylulose 5-phosphate = [ThiS sulfur-carrier protein]-C-terminal Gly-Gly + 2-[(2R,5Z)-2-carboxy-4-methylthiazol-5(2H)-ylidene]ethyl phosphate + 2 H2O + H(+). Its pathway is cofactor biosynthesis; thiamine diphosphate biosynthesis. Catalyzes the rearrangement of 1-deoxy-D-xylulose 5-phosphate (DXP) to produce the thiazole phosphate moiety of thiamine. Sulfur is provided by the thiocarboxylate moiety of the carrier protein ThiS. In vitro, sulfur can be provided by H(2)S. This chain is Thiazole synthase, found in Prochlorococcus marinus (strain SARG / CCMP1375 / SS120).